Consider the following 134-residue polypeptide: Aspartate 1-decarboxylase (134 aa).

The active-site Schiff-base intermediate with substrate; via pyruvic acid is the Ser25. Pyruvic acid (Ser) is present on Ser25. Thr57 is a substrate binding site. The active-site Proton donor is Tyr58. A substrate-binding site is contributed by 73 to 75 (GAA).

It belongs to the PanD family. As to quaternary structure, heterooctamer of four alpha and four beta subunits. Pyruvate serves as cofactor. Post-translationally, is synthesized initially as an inactive proenzyme, which is activated by self-cleavage at a specific serine bond to produce a beta-subunit with a hydroxyl group at its C-terminus and an alpha-subunit with a pyruvoyl group at its N-terminus.

The protein localises to the cytoplasm. The catalysed reaction is L-aspartate + H(+) = beta-alanine + CO2. The protein operates within cofactor biosynthesis; (R)-pantothenate biosynthesis; beta-alanine from L-aspartate: step 1/1. Catalyzes the pyruvoyl-dependent decarboxylation of aspartate to produce beta-alanine. This chain is Aspartate 1-decarboxylase, found in Geobacter sp. (strain M21).